Here is an 845-residue protein sequence, read N- to C-terminus: MIIATSLRSQTFCTWRAWRAVHSTAVRLESKLNEVPIDRTRNIGIIAHIDAGKTTTTERMLYYSGKTKRIGNVDEGDTVTDYLPSERQRGITIQSAAISIPWNNHKINIIDTPGHADFTFEVTRSLRVLDGAVTILDGVAGVEAQTEKVWKQATSLNIPKIAYVNKMDRPGAGFSRTVMEIIEKLQTRVVLCNVPYFENSKDNDPVFCGVADILHVKLLKWNPEIDPHGKNITVIDIEAERDTYPEVYETVVKSRESMVETLGEFDEAIIDSFLESNEDYMNIPINVLNEAIRKATLENYLTPVYCGSSFRNIGVQPLMDGVVKYLPSPLQISVPEITSSATKNVKIKHVKAKQAVKQDMEVTTKMNNRTGLVVNANPNLTLALAFKVMTHATRGVMTFFRVYSGKLVSNSIITNTTTGKKLHVKKLFMMHGDEPEEVKHISSGNIGVITGHEDDIQTGDTLVSHSHLKKGFSEMESNLKLLPIEIPPPLFNSAIEPQTAGDEAYMKECVRILTREDPSLKVSVDEEMGQTIISGMGELHLDIVKERLVRDMKAKVTLRDVAVSYKETLLNPGSSYKQTSESGSVSIEIEMDSFEGAAEESSFFEENGAMIIAEDNNIIIIEPSAISQNMLKALEERRWKSTYSLEDLQEIVIQGCLTALQMGGPIFGLSLHSTVIRVKSWDFPVADSSVASTVLLDVSRSAVTSYIATNRDWFGILEPIMETRVYIDSDIMGEVSHDLTQRCQAVIKSIEDESTQDVDALAWAKDEAEKTFLPPDYTMKAGKDAISYKNKKIIIAETPLREMIGYLSRLRSITQGRGTFDMTYIGMRRAIKSRFDAISKEFNFM.

A mitochondrion-targeting transit peptide spans 1–28 (MIIATSLRSQTFCTWRAWRAVHSTAVRL). The region spanning 38 to 330 (DRTRNIGIIA…GVVKYLPSPL (293 aa)) is the tr-type G domain. GTP contacts are provided by residues 47-54 (AHIDAGKT), 111-115 (DTPGH), and 165-168 (NKMD).

It belongs to the TRAFAC class translation factor GTPase superfamily. Classic translation factor GTPase family. EF-G/EF-2 subfamily.

It localises to the mitochondrion. Its function is as follows. Mitochondrial GTPase that mediates the disassembly of ribosomes from messenger RNA at the termination of mitochondrial protein biosynthesis. Not involved in the GTP-dependent ribosomal translocation step during translation elongation. The chain is Ribosome-releasing factor 2, mitochondrial from Scheffersomyces stipitis (strain ATCC 58785 / CBS 6054 / NBRC 10063 / NRRL Y-11545) (Yeast).